We begin with the raw amino-acid sequence, 148 residues long: Large ribosomal subunit protein bL9 (148 aa).

Belongs to the bacterial ribosomal protein bL9 family.

Its function is as follows. Binds to the 23S rRNA. This is Large ribosomal subunit protein bL9 from Pseudomonas putida (strain GB-1).